A 95-amino-acid polypeptide reads, in one-letter code: Late cornified envelope protein 7A (95 aa).

This sequence belongs to the LCE family.

Functionally, precursors of the cornified envelope of the stratum corneum. The chain is Late cornified envelope protein 7A from Homo sapiens (Human).